The following is a 68-amino-acid chain: Large ribosomal subunit protein bL28 (68 aa).

The segment at 1–30 (MAKICDHCGKKPQSGNNVSHANNKSKRRFE) is disordered. The span at 13-22 (QSGNNVSHAN) shows a compositional bias: polar residues.

Belongs to the bacterial ribosomal protein bL28 family.

In Solidesulfovibrio magneticus (strain ATCC 700980 / DSM 13731 / RS-1) (Desulfovibrio magneticus), this protein is Large ribosomal subunit protein bL28.